Consider the following 111-residue polypeptide: Ribosome-binding factor A (111 aa).

This sequence belongs to the RbfA family. As to quaternary structure, monomer. Binds 30S ribosomal subunits, but not 50S ribosomal subunits or 70S ribosomes.

The protein resides in the cytoplasm. Its function is as follows. One of several proteins that assist in the late maturation steps of the functional core of the 30S ribosomal subunit. Associates with free 30S ribosomal subunits (but not with 30S subunits that are part of 70S ribosomes or polysomes). Required for efficient processing of 16S rRNA. May interact with the 5'-terminal helix region of 16S rRNA. The protein is Ribosome-binding factor A of Helicobacter pylori (strain G27).